The following is a 58-amino-acid chain: VIEPKCYKYEGKKCPPDINPVCGTDKRTYYNECALCVFIRQSTKKADKAIKIKKWGKC.

One can recognise a Kazal-like domain in the interval 1–58 (VIEPKCYKYEGKKCPPDINPVCGTDKRTYYNECALCVFIRQSTKKADKAIKIKKWGKC). 3 disulfide bridges follow: cysteine 6–cysteine 36, cysteine 14–cysteine 33, and cysteine 22–cysteine 58.

Monomer. Skin.

Its subcellular location is the secreted. Functionally, has antibacterial activity against Gram-negative bacterium E.coli ATCC 11229. Shows hemagglutinating activity. Inhibits prolyl endopeptidase, but not trypsin, chymotrypsin, V8 protease and proteinase K. May have a role in mucosal defense against microbes by interacting directly with their membranes. This chain is Proteinase inhibitor PSKP-1, found in Phyllomedusa sauvagei (Sauvage's leaf frog).